Consider the following 60-residue polypeptide: UPF0434 protein SG0997 (60 aa).

The protein belongs to the UPF0434 family.

The chain is UPF0434 protein SG0997 from Sodalis glossinidius (strain morsitans).